An 83-amino-acid chain; its full sequence is uncharacterized protein (83 aa).

The helical transmembrane segment at Ile-50–Ile-70 threads the bilayer.

It belongs to the plectrovirus ORF7 family.

The protein localises to the host membrane. This is an uncharacterized protein from Spiroplasma citri (SpV1).